The primary structure comprises 698 residues: Adhesion G protein-coupled receptor F4 (698 aa).

The signal sequence occupies residues Met-1–Cys-19. Topologically, residues Ser-20–Thr-409 are extracellular. Asn-61, Asn-168, Asn-213, Asn-268, Asn-290, Asn-344, and Asn-375 each carry an N-linked (GlcNAc...) asparagine glycan. A GAIN-B domain is found at Arg-250–Lys-401. 2 cysteine pairs are disulfide-bonded: Cys-353-Cys-380 and Cys-368-Cys-382. The segment at Cys-353–Lys-401 is GPS. The chain crosses the membrane as a helical span at residues Phe-410 to Val-430. At Trp-431–His-444 the chain is on the cytoplasmic side. Residues Val-445 to Ser-465 traverse the membrane as a helical segment. The N-linked (GlcNAc...) asparagine glycan is linked to Asn-466. Over Asn-466–His-486 the chain is Extracellular. Residues Phe-487–Ile-507 traverse the membrane as a helical segment. At Leu-508 to Arg-518 the chain is on the cytoplasmic side. A helical transmembrane segment spans residues Met-519–Val-539. Residues Thr-540–Ala-566 lie on the Extracellular side of the membrane. An N-linked (GlcNAc...) asparagine glycan is attached at Asn-559. A helical transmembrane segment spans residues Phe-567–Ile-587. Residues Asn-588–Asn-611 lie on the Cytoplasmic side of the membrane. Residues Val-612–Glu-632 traverse the membrane as a helical segment. Residues Gly-633 to His-635 lie on the Extracellular side of the membrane. Residues Leu-636–Phe-656 form a helical membrane-spanning segment. Over Gly-657 to Arg-698 the chain is Cytoplasmic.

This sequence belongs to the G-protein coupled receptor 2 family. Adhesion G-protein coupled receptor (ADGR) subfamily. Expressed in squamous epithelia.

The protein localises to the membrane. Orphan receptor. This chain is Adhesion G protein-coupled receptor F4 (Adgrf4), found in Mus musculus (Mouse).